We begin with the raw amino-acid sequence, 726 residues long: Procollagen-lysine,2-oxoglutarate 5-dioxygenase 1 (726 aa).

Positions 1-18 (MRLLLLLAPLGWLLLAET) are cleaved as a signal peptide. Residues N196 and N537 are each glycosylated (N-linked (GlcNAc...) asparagine). In terms of domain architecture, Fe2OG dioxygenase spans 635-726 (QFDLAFVVRY…RYIAVSFVDP (92 aa)). Fe cation-binding residues include H655 and D657. N-linked (GlcNAc...) asparagine glycosylation is present at N685. Residue H707 participates in Fe cation binding. The active site involves R717.

As to quaternary structure, homodimer. Identified in a complex with P3H3 and P3H4. Fe(2+) is required as a cofactor. Requires L-ascorbate as cofactor.

It is found in the rough endoplasmic reticulum membrane. It catalyses the reaction L-lysyl-[collagen] + 2-oxoglutarate + O2 = (5R)-5-hydroxy-L-lysyl-[collagen] + succinate + CO2. Part of a complex composed of PLOD1, P3H3 and P3H4 that catalyzes hydroxylation of lysine residues in collagen alpha chains and is required for normal assembly and cross-linkling of collagen fibrils. Forms hydroxylysine residues in -Xaa-Lys-Gly- sequences in collagens. These hydroxylysines serve as sites of attachment for carbohydrate units and are essential for the stability of the intermolecular collagen cross-links. This is Procollagen-lysine,2-oxoglutarate 5-dioxygenase 1 (PLOD1) from Bos taurus (Bovine).